Consider the following 482-residue polypeptide: ATP synthase subunit beta (482 aa).

161–168 provides a ligand contact to ATP; the sequence is GGAGVGKT.

The protein belongs to the ATPase alpha/beta chains family. As to quaternary structure, F-type ATPases have 2 components, CF(1) - the catalytic core - and CF(0) - the membrane proton channel. CF(1) has five subunits: alpha(3), beta(3), gamma(1), delta(1), epsilon(1). CF(0) has three main subunits: a(1), b(2) and c(9-12). The alpha and beta chains form an alternating ring which encloses part of the gamma chain. CF(1) is attached to CF(0) by a central stalk formed by the gamma and epsilon chains, while a peripheral stalk is formed by the delta and b chains.

It is found in the cell inner membrane. The catalysed reaction is ATP + H2O + 4 H(+)(in) = ADP + phosphate + 5 H(+)(out). Produces ATP from ADP in the presence of a proton gradient across the membrane. The catalytic sites are hosted primarily by the beta subunits. The sequence is that of ATP synthase subunit beta from Anaeromyxobacter dehalogenans (strain 2CP-C).